The sequence spans 258 residues: Tryptophan synthase alpha chain (258 aa).

Catalysis depends on proton acceptor residues Glu52 and Asp63.

Belongs to the TrpA family. As to quaternary structure, tetramer of two alpha and two beta chains.

The catalysed reaction is (1S,2R)-1-C-(indol-3-yl)glycerol 3-phosphate + L-serine = D-glyceraldehyde 3-phosphate + L-tryptophan + H2O. The protein operates within amino-acid biosynthesis; L-tryptophan biosynthesis; L-tryptophan from chorismate: step 5/5. In terms of biological role, the alpha subunit is responsible for the aldol cleavage of indoleglycerol phosphate to indole and glyceraldehyde 3-phosphate. This Streptococcus pneumoniae (strain JJA) protein is Tryptophan synthase alpha chain.